Reading from the N-terminus, the 1078-residue chain is Lon protease homolog, mitochondrial (1078 aa).

Residues 1–27 (MIKASKCNKPRALFLVRVSIPRTFIRN) constitute a mitochondrion transit peptide. The span at 71-123 (SEKEKQPSTDKSNDKDKPSRKEKGKDKEKENEEKKDINMDEKYEINEETDTKP) shows a compositional bias: basic and acidic residues. A disordered region spans residues 71–179 (SEKEKQPSTD…KEFLSPSDSG (109 aa)). Over residues 127-157 (PNNPVSSKSNISSSSGGDNNNNNNNNNNNND) the composition is skewed to low complexity. A compositionally biased stretch (basic and acidic residues) spans 158–172 (SDGKNDDGSPKDKEF). In terms of domain architecture, Lon N-terminal spans 182–400 (PPFLAIAMKD…LSLQLLQVEA (219 aa)). Position 548–555 (548–555 (GPPGTGKT)) interacts with ATP. Positions 792 to 825 (NSPIEYIQSNTEVKAETTTESQQEQEKEKEKDEE) are disordered. Positions 815 to 825 (EQEKEKEKDEE) are enriched in basic and acidic residues. One can recognise a Lon proteolytic domain in the interval 861–1049 (TLNPGVATGL…SEVFEHLFQG (189 aa)). Residues Ser-955 and Lys-998 contribute to the active site.

It belongs to the peptidase S16 family. Homohexamer or homoheptamer. Organized in a ring with a central cavity.

The protein resides in the mitochondrion matrix. The catalysed reaction is Hydrolysis of proteins in presence of ATP.. In terms of biological role, ATP-dependent serine protease that mediates the selective degradation of misfolded, unassembled or oxidatively damaged polypeptides as well as certain short-lived regulatory proteins in the mitochondrial matrix. May also have a chaperone function in the assembly of inner membrane protein complexes. Participates in the regulation of mitochondrial gene expression and in the maintenance of the integrity of the mitochondrial genome. Binds to mitochondrial DNA in a site-specific manner. The chain is Lon protease homolog, mitochondrial from Candida albicans (strain SC5314 / ATCC MYA-2876) (Yeast).